The chain runs to 270 residues: Nodule lectin (270 aa).

A signal peptide spans Met1–Ala33. Positions Leu34 to Leu41 are excised as a propeptide. Residue Asn134 is glycosylated (N-linked (GlcNAc...) asparagine).

The protein belongs to the leguminous lectin family. In terms of processing, glycosylated in a boron-dependent manner. Glycosylation is required for localization to symbiosomes. 3 different glycosylation variants, NLEC-1A, NLEC-1B and NLEC-1C, have been identified. As to expression, expressed in nodules of Rhizobium-infected and uninfected roots and in the root stele near the nodule attachment point. In roots which have been colonized by the endomycorrhizal fungus G.versiforme, detected only in cortical cells colonized by the fungus, mainly those containing arbuscules.

The protein resides in the symbiosome. Its subcellular location is the peribacteroid space. The protein localises to the peribacteroid membrane. Involved in symbiosome development. The polypeptide is Nodule lectin (NLEC1) (Pisum sativum (Garden pea)).